The following is a 163-amino-acid chain: Nucleotide-binding protein CYB_0891 (163 aa).

Belongs to the YajQ family.

In terms of biological role, nucleotide-binding protein. This Synechococcus sp. (strain JA-2-3B'a(2-13)) (Cyanobacteria bacterium Yellowstone B-Prime) protein is Nucleotide-binding protein CYB_0891.